The chain runs to 384 residues: S-adenosylmethionine synthase (384 aa).

H15 lines the ATP pocket. Residue D17 coordinates Mg(2+). K(+) is bound at residue E43. L-methionine is bound by residues E56 and Q99. Residues 99-109 (QSSDINQGVDR) form a flexible loop region. ATP contacts are provided by residues 164–166 (DAK), 230–231 (RF), D239, 245–246 (RK), A262, and K266. D239 serves as a coordination point for L-methionine. An L-methionine-binding site is contributed by K270.

Belongs to the AdoMet synthase family. Homotetramer; dimer of dimers. It depends on Mg(2+) as a cofactor. K(+) serves as cofactor.

Its subcellular location is the cytoplasm. It carries out the reaction L-methionine + ATP + H2O = S-adenosyl-L-methionine + phosphate + diphosphate. The protein operates within amino-acid biosynthesis; S-adenosyl-L-methionine biosynthesis; S-adenosyl-L-methionine from L-methionine: step 1/1. Catalyzes the formation of S-adenosylmethionine (AdoMet) from methionine and ATP. The overall synthetic reaction is composed of two sequential steps, AdoMet formation and the subsequent tripolyphosphate hydrolysis which occurs prior to release of AdoMet from the enzyme. This is S-adenosylmethionine synthase from Pasteurella multocida (strain Pm70).